The chain runs to 590 residues: Negative elongation factor C/D (590 aa).

Residues 16 to 43 (GSAAEWGDEADGGQQEDDSGEGEDDAEV) are disordered. Residues 21 to 43 (WGDEADGGQQEDDSGEGEDDAEV) show a composition bias toward acidic residues.

It belongs to the NELF-D family. The NELF complex is composed of NELFA, NELFB, NELFCD (isoform NELF-C or isoform NELF-D) and NELFE; NELFA and NELFCD form a stable subcomplex that binds primarily through NELFCD to the N-terminus of NELFB. Binds RNA which may help to stabilize the NELF complex on nucleic acid. In vitro, the NELFA:NELFCD subcomplex binds to ssDNA and ssRNA in a sequence- and structure-dependent manner. Interacts with ARAF. Interacts with PCF11. Interacts with KAT8. As to expression, widely expressed. Expressed in heart, brain, lung, placenta, liver, skeletal and cardiac muscle, adrenal, thyroid, kidney and pancreas.

It localises to the nucleus. Essential component of the NELF complex, a complex that negatively regulates the elongation of transcription by RNA polymerase II. The NELF complex, which acts via an association with the DSIF complex and causes transcriptional pausing, is counteracted by the P-TEFb kinase complex. Functionally, (Microbial infection) The NELF complex is involved in HIV-1 latency possibly involving recruitment of PCF11 to paused RNA polymerase II. In Homo sapiens (Human), this protein is Negative elongation factor C/D (NELFCD).